Here is a 604-residue protein sequence, read N- to C-terminus: UvrABC system protein C (604 aa).

A GIY-YIG domain is found at 17–95; that stretch reads SQPGVYRMLN…IKSLAPRYNI (79 aa). The UVR domain maps to 204–239; that stretch reads DEVLKTIEQKMFEASDRQAYEQAVLFRDQMQALRMI.

It belongs to the UvrC family. As to quaternary structure, interacts with UvrB in an incision complex.

It is found in the cytoplasm. Its function is as follows. The UvrABC repair system catalyzes the recognition and processing of DNA lesions. UvrC both incises the 5' and 3' sides of the lesion. The N-terminal half is responsible for the 3' incision and the C-terminal half is responsible for the 5' incision. The sequence is that of UvrABC system protein C from Nitrosomonas eutropha (strain DSM 101675 / C91 / Nm57).